The primary structure comprises 162 residues: uncharacterized protein (162 aa).

The span at 65 to 76 (EEKPLEVAQDRN) shows a compositional bias: basic and acidic residues. The segment at 65-93 (EEKPLEVAQDRNNKRKAPSHLEPAHDFIS) is disordered.

This is an uncharacterized protein from Bacillus subtilis (strain 168).